The primary structure comprises 507 residues: 2,3-bisphosphoglycerate-independent phosphoglycerate mutase (507 aa).

Positions 11 and 61 each coordinate Mn(2+). S61 acts as the Phosphoserine intermediate in catalysis. Substrate contacts are provided by residues H122, 150–151 (RD), R182, R188, 257–260 (RPDR), and K332. Mn(2+) is bound by residues D397, H401, D438, H439, and H456.

This sequence belongs to the BPG-independent phosphoglycerate mutase family. In terms of assembly, monomer. Requires Mn(2+) as cofactor.

It carries out the reaction (2R)-2-phosphoglycerate = (2R)-3-phosphoglycerate. The protein operates within carbohydrate degradation; glycolysis; pyruvate from D-glyceraldehyde 3-phosphate: step 3/5. Catalyzes the interconversion of 2-phosphoglycerate and 3-phosphoglycerate. The sequence is that of 2,3-bisphosphoglycerate-independent phosphoglycerate mutase from Mycoplasma genitalium (strain ATCC 33530 / DSM 19775 / NCTC 10195 / G37) (Mycoplasmoides genitalium).